Reading from the N-terminus, the 121-residue chain is Nitrogenase-stabilizing/protective protein NifW (121 aa).

Belongs to the NifW family. As to quaternary structure, homotrimer; associates with NifD.

In terms of biological role, may protect the nitrogenase Fe-Mo protein from oxidative damage. This chain is Nitrogenase-stabilizing/protective protein NifW, found in Synechococcus sp. (strain JA-2-3B'a(2-13)) (Cyanobacteria bacterium Yellowstone B-Prime).